Consider the following 500-residue polypeptide: Hepatic triacylglycerol lipase (500 aa).

Positions 1-21 (MENPLCVSIFLFYCILIQSSA) are cleaved as a signal peptide. Residues 23 to 44 (GQSLGPESFGRRSRAAETNKTP) form a disordered region. N-linked (GlcNAc...) asparagine glycosylation is found at Asn-67 and Asn-78. The active-site Nucleophile is Ser-168. Catalysis depends on Asp-194, which acts as the Charge relay system. Positions 254-277 (CHFLELYKHFAKHGLNAITRTVKC) are essential for determining substrate specificity. His-279 serves as the catalytic Charge relay system. One can recognise a PLAT domain in the interval 353 to 487 (YHYQFKIRFI…HPAREKTFVR (135 aa)). 2 N-linked (GlcNAc...) asparagine glycosylation sites follow: Asn-363 and Asn-398.

It belongs to the AB hydrolase superfamily. Lipase family. In terms of assembly, homodimer.

Its subcellular location is the secreted. The enzyme catalyses a triacylglycerol + H2O = a diacylglycerol + a fatty acid + H(+). It carries out the reaction a 1-acyl-sn-glycero-3-phosphocholine + H2O = sn-glycerol 3-phosphocholine + a fatty acid + H(+). It catalyses the reaction a 1,2-diacyl-sn-glycero-3-phosphocholine + H2O = a 2-acyl-sn-glycero-3-phosphocholine + a fatty acid + H(+). The catalysed reaction is 1,2,3-tri-(9Z-octadecenoyl)-glycerol + H2O = di-(9Z)-octadecenoylglycerol + (9Z)-octadecenoate + H(+). The enzyme catalyses 1,2-di-(9Z-octadecenoyl)-sn-glycero-3-phosphocholine + H2O = (9Z-octadecenoyl)-sn-glycero-3-phosphocholine + (9Z)-octadecenoate + H(+). It carries out the reaction 1,2,3-tributanoylglycerol + H2O = dibutanoylglycerol + butanoate + H(+). It catalyses the reaction 1,2-dihexadecanoyl-sn-glycero-3-phosphocholine + H2O = hexadecanoyl-sn-glycero-3-phosphocholine + hexadecanoate + H(+). The catalysed reaction is 1,2-di-(9Z-octadecenoyl)-sn-glycerol + H2O = 2-(9Z-octadecenoyl)-glycerol + (9Z)-octadecenoate + H(+). The enzyme catalyses 1,2,3-tri-(9Z-octadecenoyl)-glycerol + H2O = 2,3-di-(9Z)-octadecenoyl-sn-glycerol + (9Z)-octadecenoate + H(+). It carries out the reaction 1-(9Z-octadecenoyl)-sn-glycero-3-phospho-L-serine + H2O = sn-glycero-3-phospho-L-serine + (9Z)-octadecenoate + H(+). It catalyses the reaction 1-hexadecanoyl-sn-glycero-3-phosphocholine + H2O = sn-glycerol 3-phosphocholine + hexadecanoate + H(+). The catalysed reaction is 1,3-di-(9Z-octadecenoyl)-glycerol + H2O = 3-(9Z-octadecenoyl)-sn-glycerol + (9Z)-octadecenoate + H(+). Its function is as follows. Catalyzes the hydrolysis of triglycerides and phospholipids present in circulating plasma lipoproteins, including chylomicrons, intermediate density lipoproteins (IDL), low density lipoproteins (LDL) of large size and high density lipoproteins (HDL), releasing free fatty acids (FFA) and smaller lipoprotein particles. Also exhibits lysophospholipase activity. Can hydrolyze both neutral lipid and phospholipid substrates but shows a greater binding affinity for neutral lipid substrates than phospholipid substrates. In native LDL, preferentially hydrolyzes the phosphatidylcholine species containing polyunsaturated fatty acids at sn-2 position. This is Hepatic triacylglycerol lipase (LIPC) from Bos taurus (Bovine).